The primary structure comprises 154 residues: MTDIIATEVAPEAAEALAPVVRAPLGDRPIQTVGRRKEAIVRVRIVPGTGKITCNGRDLEAYFPSKVHQQLIKDPLVTTEKAEEFDVIANLRGGGTTGQAGALRLAIARALIASEPDDRPALKKAGFLTRDARAKESKKYGLKKARKAPQYSKR.

A disordered region spans residues 133–154; that stretch reads RAKESKKYGLKKARKAPQYSKR. Residues 140 to 154 are compositionally biased toward basic residues; sequence YGLKKARKAPQYSKR.

It belongs to the universal ribosomal protein uS9 family.

This is Small ribosomal subunit protein uS9 from Salinispora tropica (strain ATCC BAA-916 / DSM 44818 / JCM 13857 / NBRC 105044 / CNB-440).